Here is a 214-residue protein sequence, read N- to C-terminus: Vascular endothelial growth factor A (214 aa).

A signal peptide spans 1 to 26 (MNFLLSWVHWTLALLLYLHHAKWSQA). 3 disulfide bridges follow: Cys-51/Cys-93, Cys-82/Cys-127, and Cys-86/Cys-129. The N-linked (GlcNAc...) asparagine glycan is linked to Asn-100. A compositionally biased stretch (basic and acidic residues) spans 131–142 (PKKDRTKPEKKS). Positions 131–159 (PKKDRTKPEKKSVRGKGKGQKRKRKKSRF) are disordered. Positions 143–159 (VRGKGKGQKRKRKKSRF) are enriched in basic residues.

The protein belongs to the PDGF/VEGF growth factor family. Homodimer; disulfide-linked. Also found as heterodimer with PGF. Interacts with NRP1. Interacts with isoform 2 of BSG. Interacts with CD82; this interaction inhibits VEGFA-mediated signaling pathway. As to expression, expressed in the pituitary, in brain, in particularly in supraoptic and paraventricular nuclei and the choroid plexus. Also found abundantly in the corpus luteum of the ovary and in kidney glomeruli. Expressed in the ductal epithelial cells of post-pubertal mammary glands. Expressed in the ductal and alveolar epithelial cells throughout the whole period of gestational evolution, lactation and involution.

Its subcellular location is the secreted. Its function is as follows. Growth factor active in angiogenesis, vasculogenesis and endothelial cell growth. Induces endothelial cell proliferation, promotes cell migration, inhibits apoptosis and induces permeabilization of blood vessels. Binds to the FLT1/VEGFR1 and KDR/VEGFR2 receptors, heparan sulfate and heparin. May play a role in increasing vascular permeability during lactation, when increased transport of molecules from the blood is required for efficient milk protein synthesis. Binding to NRP1 receptor initiates a signaling pathway needed for motor neuron axon guidance and cell body migration, including for the caudal migration of facial motor neurons from rhombomere 4 to rhombomere 6 during embryonic development. Also binds the DEAR/FBXW7-AS1 receptor. This chain is Vascular endothelial growth factor A (Vegfa), found in Rattus norvegicus (Rat).